Consider the following 400-residue polypeptide: Arabinan endo-1,5-alpha-L-arabinosidase B (400 aa).

The N-terminal stretch at Met-1–Ser-16 is a signal peptide. A glycan (N-linked (GlcNAc...) asparagine) is linked at Asn-24. Asp-70 acts as the Proton acceptor in catalysis. Residue Asn-184 is glycosylated (N-linked (GlcNAc...) asparagine). Glu-277 acts as the Proton donor in catalysis. N-linked (GlcNAc...) asparagine glycosylation is present at Asn-372.

This sequence belongs to the glycosyl hydrolase 43 family.

It is found in the secreted. It carries out the reaction Endohydrolysis of (1-&gt;5)-alpha-arabinofuranosidic linkages in (1-&gt;5)-arabinans.. Its pathway is glycan metabolism; L-arabinan degradation. Endo-1,5-alpha-L-arabinanase involved in degradation of pectin. Its preferred substrate is linear 1,5-alpha-L-arabinan. The protein is Arabinan endo-1,5-alpha-L-arabinosidase B (abnB) of Emericella nidulans (strain FGSC A4 / ATCC 38163 / CBS 112.46 / NRRL 194 / M139) (Aspergillus nidulans).